The primary structure comprises 348 residues: Eukaryotic translation initiation factor 3 subunit F (348 aa).

The MPN domain occupies 30 to 166; that stretch reads VVIQPQAIFS…TRTYISAPVG (137 aa). Residues 312–327 are compositionally biased toward gly residues; that stretch reads STAIGGTGAESGGQRG. The tract at residues 312 to 348 is disordered; sequence STAIGGTGAESGGQRGGQRNNRQRGGQQRNQAEELRA. Low complexity predominate over residues 328–341; it reads GQRNNRQRGGQQRN.

It belongs to the eIF-3 subunit F family. Component of the eukaryotic translation initiation factor 3 (eIF-3) complex.

The protein localises to the cytoplasm. Functionally, component of the eukaryotic translation initiation factor 3 (eIF-3) complex, which is involved in protein synthesis of a specialized repertoire of mRNAs and, together with other initiation factors, stimulates binding of mRNA and methionyl-tRNAi to the 40S ribosome. The eIF-3 complex specifically targets and initiates translation of a subset of mRNAs involved in cell proliferation. The chain is Eukaryotic translation initiation factor 3 subunit F from Coccidioides immitis (strain RS) (Valley fever fungus).